The sequence spans 539 residues: CTP synthase (539 aa).

The segment at 1 to 272 (MTLRSKMTKY…AQIILSHFKI (272 aa)) is amidoligase domain. Position 19 (Ser19) interacts with CTP. Residue Ser19 participates in UTP binding. 20–25 (GLGKGV) contacts ATP. Tyr60 contacts L-glutamine. Asp77 serves as a coordination point for ATP. Residues Asp77 and Glu147 each contribute to the Mg(2+) site. CTP is bound by residues 154-156 (DIE), 193-198 (KSKPTQ), and Lys229. UTP contacts are provided by residues 193–198 (KSKPTQ) and Lys229. Residues 298 to 539 (KILMVGKYVE…SFLRVLIKNN (242 aa)) enclose the Glutamine amidotransferase type-1 domain. Gly360 provides a ligand contact to L-glutamine. Cys387 serves as the catalytic Nucleophile; for glutamine hydrolysis. Residues 388-391 (LGFQ), Glu410, and Arg469 contribute to the L-glutamine site. Active-site residues include His514 and Glu516.

It belongs to the CTP synthase family. In terms of assembly, homotetramer.

The catalysed reaction is UTP + L-glutamine + ATP + H2O = CTP + L-glutamate + ADP + phosphate + 2 H(+). It catalyses the reaction L-glutamine + H2O = L-glutamate + NH4(+). It carries out the reaction UTP + NH4(+) + ATP = CTP + ADP + phosphate + 2 H(+). The protein operates within pyrimidine metabolism; CTP biosynthesis via de novo pathway; CTP from UDP: step 2/2. With respect to regulation, allosterically activated by GTP, when glutamine is the substrate; GTP has no effect on the reaction when ammonia is the substrate. The allosteric effector GTP functions by stabilizing the protein conformation that binds the tetrahedral intermediate(s) formed during glutamine hydrolysis. Inhibited by the product CTP, via allosteric rather than competitive inhibition. Its function is as follows. Catalyzes the ATP-dependent amination of UTP to CTP with either L-glutamine or ammonia as the source of nitrogen. Regulates intracellular CTP levels through interactions with the four ribonucleotide triphosphates. The sequence is that of CTP synthase from Mycoplasmopsis pulmonis (strain UAB CTIP) (Mycoplasma pulmonis).